The chain runs to 258 residues: Aquaglyceroporin (258 aa).

Residues 1-11 (MHMLFYKSYVR) lie on the Cytoplasmic side of the membrane. A helical membrane pass occupies residues 12–32 (EFIGEFLGTFVLMFLGEGATA). Over 33 to 45 (NFHTTGLSGDWYK) the chain is Extracellular. Residues 46 to 66 (LCLGWGLAVFFGILVSAKLSG) form a helical membrane-spanning segment. Glycerol contacts are provided by glycine 66, alanine 67, and asparagine 70. Over 67 to 87 (AHLNLAVSIGLSSINKFDLKK) the chain is Cytoplasmic. The chain crosses the membrane as a helical span at residues 88–108 (IPVYFFAQLLGAFVGTSTVYG). The Extracellular segment spans residues 109–135 (LYHGFISNSKIPQFAWETSRNPSISLT). Serine 127 provides a ligand contact to glycerol. The helical transmembrane segment at 136–156 (GAFFNELILTGILLLVILVVV) threads the bilayer. At 157–171 (DENICGKFHILKLSS) the chain is on the cytoplasmic side. The helical transmembrane segment at 172 to 192 (VVGLIILCIGITFGGNTGFAL) threads the bilayer. Glycerol-binding residues include glycine 189, phenylalanine 190, asparagine 193, and arginine 196. The Extracellular segment spans residues 193–217 (NPSRDLGSRFLSLIAYGKDTFTKDN). The chain crosses the membrane as a helical span at residues 218–238 (FYFWVPLVAPCVGSVVFCQFY). Over 239 to 258 (DKVICPLVDLANNEKDGVDL) the chain is Cytoplasmic.

It belongs to the MIP/aquaporin (TC 1.A.8) family. As to quaternary structure, homotetramer.

Its subcellular location is the cell membrane. It carries out the reaction H2O(in) = H2O(out). The enzyme catalyses glycerol(in) = glycerol(out). It catalyses the reaction urea(in) = urea(out). The catalysed reaction is NH4(+)(in) = NH4(+)(out). It carries out the reaction methylamine(out) = methylamine(in). The enzyme catalyses formamide(out) = formamide(in). In terms of biological role, mediates water and glycerol transport across the cell membrane. Permeable to sugar alcohols of up to five carbons and urea. Permeable to ammonia, methylamine and formamide. The protein is Aquaglyceroporin of Plasmodium falciparum (isolate 3D7).